Reading from the N-terminus, the 654-residue chain is Arrestin domain-containing protein C (654 aa).

The C2 domain occupies 1 to 105; it reads MTQRSLKINI…AKRNLMDQWL (105 aa). Residues 616 to 647 are a coiled coil; sequence AKRIFLKIQQIQSERQKQQEQQEQQVVSNLEA.

This sequence belongs to the arrestin family.

In Dictyostelium discoideum (Social amoeba), this protein is Arrestin domain-containing protein C (adcC).